Here is a 473-residue protein sequence, read N- to C-terminus: Photosystem II CP43 reaction center protein (473 aa).

Residues 1–14 (MKTLYSLRRFYPVE) constitute a propeptide that is removed on maturation. Threonine 15 bears the N-acetylthreonine mark. Residue threonine 15 is modified to Phosphothreonine. Helical transmembrane passes span 69–93 (LFEV…PHLA), 134–155 (LLGP…KDRN), 178–200 (KALY…RRIT), 255–275 (KPFA…LSYS), and 291–312 (WFNN…ASQA). Residue glutamate 367 coordinates [CaMn4O5] cluster. The chain crosses the membrane as a helical span at residues 447–471 (RARAAAAGFEKGIDRDFEPVLFMTP).

Belongs to the PsbB/PsbC family. PsbC subfamily. In terms of assembly, PSII is composed of 1 copy each of membrane proteins PsbA, PsbB, PsbC, PsbD, PsbE, PsbF, PsbH, PsbI, PsbJ, PsbK, PsbL, PsbM, PsbT, PsbX, PsbY, PsbZ, Psb30/Ycf12, at least 3 peripheral proteins of the oxygen-evolving complex and a large number of cofactors. It forms dimeric complexes. Requires Binds multiple chlorophylls and provides some of the ligands for the Ca-4Mn-5O cluster of the oxygen-evolving complex. It may also provide a ligand for a Cl- that is required for oxygen evolution. PSII binds additional chlorophylls, carotenoids and specific lipids. as cofactor.

The protein localises to the plastid. The protein resides in the chloroplast thylakoid membrane. In terms of biological role, one of the components of the core complex of photosystem II (PSII). It binds chlorophyll and helps catalyze the primary light-induced photochemical processes of PSII. PSII is a light-driven water:plastoquinone oxidoreductase, using light energy to abstract electrons from H(2)O, generating O(2) and a proton gradient subsequently used for ATP formation. This chain is Photosystem II CP43 reaction center protein, found in Nuphar advena (Common spatterdock).